The sequence spans 510 residues: Bifunctional pantoate ligase/cytidylate kinase (510 aa).

Residues 1-276 (MKKVIIRKTE…CGETRLIDHV (276 aa)) are pantoate--beta-alanine ligase. 29–36 (MGNLHNGH) is an ATP binding site. Histidine 36 (proton donor) is an active-site residue. Glutamine 61 serves as a coordination point for (R)-pantoate. Glutamine 61 is a binding site for beta-alanine. ATP is bound at residue 150–153 (GEKD). Residue glutamine 156 coordinates (R)-pantoate. Residue 187-190 (LSSR) participates in ATP binding. The segment at 277 to 510 (FLMKRRPIIA…DKIPKETEIK (234 aa)) is cytidylate kinase.

In the N-terminal section; belongs to the pantothenate synthetase family. This sequence in the C-terminal section; belongs to the cytidylate kinase family. Type 1 subfamily.

It localises to the cytoplasm. It catalyses the reaction (R)-pantoate + beta-alanine + ATP = (R)-pantothenate + AMP + diphosphate + H(+). The catalysed reaction is CMP + ATP = CDP + ADP. The enzyme catalyses dCMP + ATP = dCDP + ADP. Its pathway is cofactor biosynthesis; (R)-pantothenate biosynthesis; (R)-pantothenate from (R)-pantoate and beta-alanine: step 1/1. In terms of biological role, catalyzes the condensation of pantoate with beta-alanine in an ATP-dependent reaction via a pantoyl-adenylate intermediate. Catalyzes the transfer of a phosphate group from ATP to either CMP or dCMP to form CDP or dCDP and ADP, respectively. This is Bifunctional pantoate ligase/cytidylate kinase from Prochlorococcus marinus (strain MIT 9215).